We begin with the raw amino-acid sequence, 807 residues long: Glycerol-3-phosphate acyltransferase (807 aa).

The short motif at 308–313 (CHRSHM) is the HXXXXD motif element.

Belongs to the GPAT/DAPAT family.

It localises to the cell inner membrane. The catalysed reaction is sn-glycerol 3-phosphate + an acyl-CoA = a 1-acyl-sn-glycero-3-phosphate + CoA. The protein operates within phospholipid metabolism; CDP-diacylglycerol biosynthesis; CDP-diacylglycerol from sn-glycerol 3-phosphate: step 1/3. This is Glycerol-3-phosphate acyltransferase from Shewanella baltica (strain OS223).